A 415-amino-acid polypeptide reads, in one-letter code: Esterase FrsA (415 aa).

The protein belongs to the FrsA family.

The enzyme catalyses a carboxylic ester + H2O = an alcohol + a carboxylate + H(+). In terms of biological role, catalyzes the hydrolysis of esters. The sequence is that of Esterase FrsA from Yersinia pseudotuberculosis serotype O:1b (strain IP 31758).